The chain runs to 246 residues: Non-structural protein ORF4b (246 aa).

The interval 1-28 (MEESLMDVPSTSGTQVYSRKARKRSHSP) is disordered. Residues 19–28 (RKARKRSHSP) are compositionally biased toward basic residues. The short motif at 22 to 38 (RKRSHSPTKKLRYVKRR) is the Nuclear localization motif element.

Interacts with host KPNA4; this interaction inhibits the nuclear import of NF-kappa-B complex.

The protein localises to the host nucleus. Its subcellular location is the host nucleolus. It is found in the host cytoplasm. Functionally, plays a role in the inhibition of host innate immunity by inhibiting the interaction between host IKBKE and MAVS. In turn, this inhibition prevents the production of host interferon beta. Additionally, inhibits host NF-kappa-B by interacting with host KPNA4 and thereby preventing the translocation of the NF-kappa-B complex into the nucleus by this importin. This is Non-structural protein ORF4b (ORF4b) from Camelus dromedarius (Dromedary).